The following is a 289-amino-acid chain: Trihelix transcription factor GT-3b (289 aa).

The region spanning W42–V98 is the Myb-like domain. A Bipartite nuclear localization signal motif is present at residues K65–K81. Residues E137–V200 are disordered. Over residues S156–V168 the composition is skewed to acidic residues. The short motif at P179 to K188 is the Nuclear localization signal element. Residues G190 to G199 are compositionally biased toward low complexity. Residues E223–L275 are a coiled coil.

In terms of assembly, heterodimer with GT-3A. Associated with the mediator complex.

Its subcellular location is the nucleus. Its function is as follows. Probable transcription factor that may play a role in the induction of CAM4 in response to pathogen and salt. This chain is Trihelix transcription factor GT-3b (GT-3B), found in Arabidopsis thaliana (Mouse-ear cress).